Here is a 444-residue protein sequence, read N- to C-terminus: 23S rRNA (uracil(1939)-C(5))-methyltransferase RlmD (444 aa).

The TRAM domain maps to 5-64 (KPKLNLTSQTARIVNLSHDGRGIARINGKATFIQGALPGEVVEFQYTRVKKDFDEGKLLS). Cys-77, Cys-83, Cys-86, and Cys-166 together coordinate [4Fe-4S] cluster. Residues Gln-276, Phe-305, Asn-310, Glu-326, Asn-353, and Asp-374 each coordinate S-adenosyl-L-methionine. Cys-400 functions as the Nucleophile in the catalytic mechanism.

Belongs to the class I-like SAM-binding methyltransferase superfamily. RNA M5U methyltransferase family. RlmD subfamily.

The catalysed reaction is uridine(1939) in 23S rRNA + S-adenosyl-L-methionine = 5-methyluridine(1939) in 23S rRNA + S-adenosyl-L-homocysteine + H(+). Its function is as follows. Catalyzes the formation of 5-methyl-uridine at position 1939 (m5U1939) in 23S rRNA. This is 23S rRNA (uracil(1939)-C(5))-methyltransferase RlmD from Legionella pneumophila (strain Lens).